A 440-amino-acid chain; its full sequence is Putative sodium-coupled neutral amino acid transporter 8 (440 aa).

A run of 11 helical transmembrane segments spans residues 29–49 (AIFI…PWAF), 58–78 (AIMV…ILGY), 100–120 (IGKL…VAFL), 156–176 (FAIT…KEIS), 183–203 (ILGT…YYVM), 223–243 (MFSV…CVTI), 255–275 (WAAV…FTGI), 300–320 (VIIA…IILL), 350–370 (VVIT…VPDI), 373–393 (VISV…GLCL), and 418–438 (VVCG…EIIA).

This sequence belongs to the amino acid/polyamine transporter 2 family.

Its subcellular location is the membrane. Its function is as follows. Putative sodium-dependent amino acid/proton antiporter. The chain is Putative sodium-coupled neutral amino acid transporter 8 (slc38a8) from Xenopus tropicalis (Western clawed frog).